A 286-amino-acid polypeptide reads, in one-letter code: Bifunctional protein FolD (286 aa).

NADP(+)-binding positions include 165–167 (GRS), Ser190, and Val231.

Belongs to the tetrahydrofolate dehydrogenase/cyclohydrolase family. As to quaternary structure, homodimer.

The enzyme catalyses (6R)-5,10-methylene-5,6,7,8-tetrahydrofolate + NADP(+) = (6R)-5,10-methenyltetrahydrofolate + NADPH. The catalysed reaction is (6R)-5,10-methenyltetrahydrofolate + H2O = (6R)-10-formyltetrahydrofolate + H(+). Its pathway is one-carbon metabolism; tetrahydrofolate interconversion. Its function is as follows. Catalyzes the oxidation of 5,10-methylenetetrahydrofolate to 5,10-methenyltetrahydrofolate and then the hydrolysis of 5,10-methenyltetrahydrofolate to 10-formyltetrahydrofolate. This Bacillus cereus (strain B4264) protein is Bifunctional protein FolD.